The primary structure comprises 640 residues: Serine/threonine-protein kinase ELM1 (640 aa).

The segment at 27 to 47 (ELDSPPITPTSQTSSFGSSFS) is disordered. The span at 35-47 (PTSQTSSFGSSFS) shows a compositional bias: low complexity. The region spanning 88–420 (YTLGVSAGSG…PIDSRNHSQI (333 aa)) is the Protein kinase domain. ATP contacts are provided by residues 94–102 (AGSGQFGYV) and Lys117. Residue Ser152 is modified to Phosphoserine. Asp259 functions as the Proton acceptor in the catalytic mechanism. 2 positions are modified to phosphoserine: Ser516 and Ser519. Positions 520-529 (LPNLTVNNDK) are enriched in polar residues. Disordered regions lie at residues 520 to 547 (LPNL…HSSL) and 562 to 587 (SPKE…MDRT). Over residues 530–541 (QNSDMKTDRSES) the composition is skewed to basic and acidic residues. Positions 569-579 (RTHINCSQDKP) are enriched in polar residues.

It belongs to the protein kinase superfamily. Ser/Thr protein kinase family. Requires Mg(2+) as cofactor.

The catalysed reaction is L-seryl-[protein] + ATP = O-phospho-L-seryl-[protein] + ADP + H(+). It catalyses the reaction L-threonyl-[protein] + ATP = O-phospho-L-threonyl-[protein] + ADP + H(+). In terms of biological role, important role in G1 events required for bud emergence and septin organization. Coordinates cell growth and cell division at G2/M, essential for efficient cytokinesis and for regulation of SWE1. The chain is Serine/threonine-protein kinase ELM1 (ELM1) from Saccharomyces cerevisiae (strain ATCC 204508 / S288c) (Baker's yeast).